Reading from the N-terminus, the 376-residue chain is MANQLSYSSLGWPYQPNASVVDTMPKEMLYMIHEHWYAFPPMNPLWYSILGVAMIILGIICVLGNGMVIYLMMTTKSLRTPTNLLVVNLAFSDFCMMAFMMPTMTSNCFAETWILGPFMCEVYGMAGSLFGCASIWSMVMITLDRYNVIVRGMAAAPLTHKKATLLLLFVWIWSGGWTILPFFGWSRYVPEGNLTSCTVDYLTKDWSSASYVVIYGLAVYFLPLITMIYCYFFIVHAVAEHEKQLREQAKKMNVASLRANADQQKQSAECRLAKVAMMTVGLWFMAWTPYLIISWAGVFSSGTRLTPLATIWGSVFAKANSCYNPIVYGISHPRYKAALYQRFPSLACGSGESGSDVKSEASATTTMEEKPKIPEA.

Residues 1–46 (MANQLSYSSLGWPYQPNASVVDTMPKEMLYMIHEHWYAFPPMNPLW) are Extracellular-facing. Asparagine 17 carries an N-linked (GlcNAc...) asparagine glycan. Residues 47–71 (YSILGVAMIILGIICVLGNGMVIYL) form a helical membrane-spanning segment. The Cytoplasmic segment spans residues 72–83 (MMTTKSLRTPTN). A helical transmembrane segment spans residues 84–108 (LLVVNLAFSDFCMMAFMMPTMTSNC). Topologically, residues 109 to 123 (FAETWILGPFMCEVY) are extracellular. A disulfide bridge links cysteine 120 with cysteine 197. Residues 124–143 (GMAGSLFGCASIWSMVMITL) traverse the membrane as a helical segment. The Cytoplasmic segment spans residues 144 to 162 (DRYNVIVRGMAAAPLTHKK). The helical transmembrane segment at 163–186 (ATLLLLFVWIWSGGWTILPFFGWS) threads the bilayer. Residues 187–210 (RYVPEGNLTSCTVDYLTKDWSSAS) are Extracellular-facing. N-linked (GlcNAc...) asparagine glycosylation occurs at asparagine 193. Residues 211–238 (YVVIYGLAVYFLPLITMIYCYFFIVHAV) form a helical membrane-spanning segment. Over 239–274 (AEHEKQLREQAKKMNVASLRANADQQKQSAECRLAK) the chain is Cytoplasmic. A helical transmembrane segment spans residues 275-298 (VAMMTVGLWFMAWTPYLIISWAGV). At 299–306 (FSSGTRLT) the chain is on the extracellular side. The chain crosses the membrane as a helical span at residues 307–331 (PLATIWGSVFAKANSCYNPIVYGIS). Residue lysine 318 is modified to N6-(retinylidene)lysine. Over 332–376 (HPRYKAALYQRFPSLACGSGESGSDVKSEASATTTMEEKPKIPEA) the chain is Cytoplasmic. A disordered region spans residues 349–376 (GSGESGSDVKSEASATTTMEEKPKIPEA). Over residues 367 to 376 (MEEKPKIPEA) the composition is skewed to basic and acidic residues.

This sequence belongs to the G-protein coupled receptor 1 family. Opsin subfamily. In terms of processing, phosphorylated on some or all of the serine and threonine residues present in the C-terminal region. Lateral eye.

The protein resides in the membrane. In terms of biological role, visual pigments are the light-absorbing molecules that mediate vision. They consist of an apoprotein, opsin, covalently linked to cis-retinal. The sequence is that of Lateral eye opsin from Limulus polyphemus (Atlantic horseshoe crab).